Here is a 57-residue protein sequence, read N- to C-terminus: uncharacterized protein (57 aa).

The chain crosses the membrane as a helical span at residues 12 to 34; sequence VIAVLSLFVFAVAVFFVGMALLT.

Its subcellular location is the membrane. This is an uncharacterized protein from Pasteurella multocida (strain Pm70).